The chain runs to 122 residues: Large ribosomal subunit protein uL18 (122 aa).

The protein belongs to the universal ribosomal protein uL18 family. In terms of assembly, part of the 50S ribosomal subunit; part of the 5S rRNA/L5/L18/L25 subcomplex. Contacts the 5S and 23S rRNAs.

In terms of biological role, this is one of the proteins that bind and probably mediate the attachment of the 5S RNA into the large ribosomal subunit, where it forms part of the central protuberance. The chain is Large ribosomal subunit protein uL18 from Desulforapulum autotrophicum (strain ATCC 43914 / DSM 3382 / VKM B-1955 / HRM2) (Desulfobacterium autotrophicum).